Reading from the N-terminus, the 318-residue chain is Death effector domain-containing protein (318 aa).

The 79-residue stretch at 25–103 (SLHRMFDIVG…RHDLLPYVTL (79 aa)) folds into the DED domain. The disordered stretch occupies residues 128 to 191 (PRALSDPEPR…SVTPDPKEKQ (64 aa)).

In terms of assembly, interacts with CASP8, CASP10, KRT8, KRT18, CASP3 and FADD. Homodimerizes and heterodimerizes with DEDD2. Post-translationally, exists predominantly in a mono- or diubiquitinated form. As to expression, widely expressed with highest levels in testis. Within the testis, highly expressed in germ cells but not expressed in Sertoli cells.

Its subcellular location is the cytoplasm. The protein resides in the nucleus. It is found in the nucleolus. A scaffold protein that directs CASP3 to certain substrates and facilitates their ordered degradation during apoptosis. May also play a role in mediating CASP3 cleavage of KRT18. Regulates degradation of intermediate filaments during apoptosis. May play a role in the general transcription machinery in the nucleus and might be an important regulator of the activity of GTF3C3. Inhibits DNA transcription in vitro. The polypeptide is Death effector domain-containing protein (Dedd) (Rattus norvegicus (Rat)).